The primary structure comprises 104 residues: Phosphoribosyl-ATP pyrophosphatase (104 aa).

It belongs to the PRA-PH family.

It is found in the cytoplasm. It carries out the reaction 1-(5-phospho-beta-D-ribosyl)-ATP + H2O = 1-(5-phospho-beta-D-ribosyl)-5'-AMP + diphosphate + H(+). Its pathway is amino-acid biosynthesis; L-histidine biosynthesis; L-histidine from 5-phospho-alpha-D-ribose 1-diphosphate: step 2/9. This chain is Phosphoribosyl-ATP pyrophosphatase, found in Streptococcus sanguinis (strain SK36).